The chain runs to 56 residues: 4Fe-4S ferredoxin FdxA (56 aa).

2 consecutive 4Fe-4S ferredoxin-type domains span residues 1–28 (MAYVINEACISCGACEPECPVNAISSGD) and 29–56 (DRYVIDADTCIDCGACAGVCPVDAPVQA). Residues cysteine 9, cysteine 12, cysteine 15, cysteine 19, cysteine 38, cysteine 41, cysteine 44, and cysteine 48 each coordinate [4Fe-4S] cluster.

Requires [4Fe-4S] cluster as cofactor.

Functionally, ferredoxins are iron-sulfur proteins that transfer electrons in a wide variety of metabolic reactions. The chain is 4Fe-4S ferredoxin FdxA from Gottschalkia acidurici (strain ATCC 7906 / DSM 604 / BCRC 14475 / CIP 104303 / KCTC 5404 / NCIMB 10678 / 9a) (Clostridium acidurici).